The primary structure comprises 142 residues: Midkine (142 aa).

A signal peptide spans 1–21; it reads MELRAFCVILLITFLAVSSQA. 5 cysteine pairs are disulfide-bonded: Cys-36–Cys-60, Cys-44–Cys-69, Cys-51–Cys-73, Cys-83–Cys-115, and Cys-93–Cys-125.

It belongs to the pleiotrophin family.

Its subcellular location is the secreted. Functionally, secreted protein that functions as a cytokine and growth factor and mediates its signal through cell-surface proteoglycan and non-proteoglycan receptors. Binds cell-surface proteoglycan receptors via their chondroitin sulfate (CS) groups. Thereby regulates many processes like inflammatory response, cell proliferation, cell adhesion, cell growth, cell survival, tissue regeneration, cell differentiation and cell migration. Inhibits mesoderm formation and promotes neural formation during development. Plays a role in development of the neuromuscular junction (NMJ). Has antibacterial activity against both Gram-positive and Gram-negative bacteria. The sequence is that of Midkine from Xenopus tropicalis (Western clawed frog).